A 385-amino-acid polypeptide reads, in one-letter code: UDP-N-acetylglucosamine--N-acetylmuramyl-(pentapeptide) pyrophosphoryl-undecaprenol N-acetylglucosamine transferase (385 aa).

Residues 11–13 (TGG), asparagine 117, arginine 160, serine 215, and glutamine 317 contribute to the UDP-N-acetyl-alpha-D-glucosamine site.

Belongs to the glycosyltransferase 28 family. MurG subfamily.

It is found in the cell inner membrane. It carries out the reaction di-trans,octa-cis-undecaprenyl diphospho-N-acetyl-alpha-D-muramoyl-L-alanyl-D-glutamyl-meso-2,6-diaminopimeloyl-D-alanyl-D-alanine + UDP-N-acetyl-alpha-D-glucosamine = di-trans,octa-cis-undecaprenyl diphospho-[N-acetyl-alpha-D-glucosaminyl-(1-&gt;4)]-N-acetyl-alpha-D-muramoyl-L-alanyl-D-glutamyl-meso-2,6-diaminopimeloyl-D-alanyl-D-alanine + UDP + H(+). It functions in the pathway cell wall biogenesis; peptidoglycan biosynthesis. Its function is as follows. Cell wall formation. Catalyzes the transfer of a GlcNAc subunit on undecaprenyl-pyrophosphoryl-MurNAc-pentapeptide (lipid intermediate I) to form undecaprenyl-pyrophosphoryl-MurNAc-(pentapeptide)GlcNAc (lipid intermediate II). This Rickettsia typhi (strain ATCC VR-144 / Wilmington) protein is UDP-N-acetylglucosamine--N-acetylmuramyl-(pentapeptide) pyrophosphoryl-undecaprenol N-acetylglucosamine transferase.